The sequence spans 145 residues: 3-hydroxyacyl-[acyl-carrier-protein] dehydratase FabZ (145 aa).

The active site involves His-47.

It belongs to the thioester dehydratase family. FabZ subfamily.

It localises to the cytoplasm. It carries out the reaction a (3R)-hydroxyacyl-[ACP] = a (2E)-enoyl-[ACP] + H2O. In terms of biological role, involved in unsaturated fatty acids biosynthesis. Catalyzes the dehydration of short chain beta-hydroxyacyl-ACPs and long chain saturated and unsaturated beta-hydroxyacyl-ACPs. This chain is 3-hydroxyacyl-[acyl-carrier-protein] dehydratase FabZ, found in Methylobacillus flagellatus (strain ATCC 51484 / DSM 6875 / VKM B-1610 / KT).